A 321-amino-acid polypeptide reads, in one-letter code: Ribosomal RNA small subunit methyltransferase H (321 aa).

S-adenosyl-L-methionine-binding positions include 43–45 (GGH), aspartate 63, phenylalanine 89, aspartate 110, and glutamine 117. Residues 286-321 (HPAGKALRAGPRETRDNPRSRSAVLRVAERSERHAA) are disordered. Basic and acidic residues-rich tracts occupy residues 295–304 (GPRETRDNPR) and 312–321 (VAERSERHAA).

This sequence belongs to the methyltransferase superfamily. RsmH family.

Its subcellular location is the cytoplasm. The catalysed reaction is cytidine(1402) in 16S rRNA + S-adenosyl-L-methionine = N(4)-methylcytidine(1402) in 16S rRNA + S-adenosyl-L-homocysteine + H(+). Its function is as follows. Specifically methylates the N4 position of cytidine in position 1402 (C1402) of 16S rRNA. In Acidithiobacillus ferrooxidans (strain ATCC 23270 / DSM 14882 / CIP 104768 / NCIMB 8455) (Ferrobacillus ferrooxidans (strain ATCC 23270)), this protein is Ribosomal RNA small subunit methyltransferase H.